Here is a 60-residue protein sequence, read N- to C-terminus: Mastoparan-V (60 aa).

The first 27 residues, 1 to 27, serve as a signal peptide directing secretion; it reads MKNTILILFTAFIALLGFFGMSAEALA. 4 AXPX repeats span residues 27 to 30, 31 to 34, 35 to 38, and 41 to 44; these read ADPV, ADPL, AGPN, and ADPE. A propeptide spanning residues 28–45 is cleaved from the precursor; sequence DPVADPLAGPNAEADPEA. Leucine 59 carries the leucine amide modification.

The protein belongs to the MCD family. Mastoparan subfamily. Expressed by the venom gland.

The protein localises to the secreted. Its subcellular location is the target cell membrane. Functionally, antimicrobial and mast cell degranulating peptide. Has broad spectrum antibacterial activity against both Gram-positive and Gram-negative bacteria (S.aureus MIC=32-64 ug/ml, S.xylosus MIC=3 ug/ml, S.alactolyticus MIC=16 ug/ml, C.koseri MIC=4 ug/ml, E.coli MIC=8 ug/ml, K.pneumoniae MIC=64 ug/ml, P.aerugiosa MIC=256 ug/ml, S.choleraesuis MIC=32 ug/ml, S.typhimurium MIC=32 ug/ml, V.parahamelytics MIC=32 ug/ml). Affects membrane permeability of E.coli. Shows hemolytic activities on sheep, chicken and human erythrocytes. Its mast cell degranulation activity may be related to the activation of G-protein coupled receptors in mast cells as well as interaction with other proteins located in cell endosomal membranes in the mast cells. The polypeptide is Mastoparan-V (Vespa velutina flavitarsus (Asian hornet)).